We begin with the raw amino-acid sequence, 501 residues long: Aspartyl/glutamyl-tRNA(Asn/Gln) amidotransferase subunit B (501 aa).

Belongs to the GatB/GatE family. GatB subfamily. In terms of assembly, heterotrimer of A, B and C subunits.

The enzyme catalyses L-glutamyl-tRNA(Gln) + L-glutamine + ATP + H2O = L-glutaminyl-tRNA(Gln) + L-glutamate + ADP + phosphate + H(+). It carries out the reaction L-aspartyl-tRNA(Asn) + L-glutamine + ATP + H2O = L-asparaginyl-tRNA(Asn) + L-glutamate + ADP + phosphate + 2 H(+). In terms of biological role, allows the formation of correctly charged Asn-tRNA(Asn) or Gln-tRNA(Gln) through the transamidation of misacylated Asp-tRNA(Asn) or Glu-tRNA(Gln) in organisms which lack either or both of asparaginyl-tRNA or glutaminyl-tRNA synthetases. The reaction takes place in the presence of glutamine and ATP through an activated phospho-Asp-tRNA(Asn) or phospho-Glu-tRNA(Gln). In Agrobacterium fabrum (strain C58 / ATCC 33970) (Agrobacterium tumefaciens (strain C58)), this protein is Aspartyl/glutamyl-tRNA(Asn/Gln) amidotransferase subunit B.